We begin with the raw amino-acid sequence, 467 residues long: Calcium-binding protein P (467 aa).

2 stretches are compositionally biased toward pro residues: residues 1–10 (MQNPQNPPPA) and 45–62 (QYPP…PPYP). A disordered region spans residues 1-311 (MQNPQNPPPA…GAYPGQPPMG (311 aa)). The short motif at 45 to 49 (QYPPQ) is the XYPPX element. A compositionally biased stretch (low complexity) spans 63-74 (GTQQPGAPGAPG). Short sequence motifs (XYPPX) lie at residues 75-79 (QYPPQ), 83-87 (QYPPQ), 94-98 (QYPPQ), 104-108 (GYPPQ), 115-119 (QYPPQ), 125-129 (GYPPQ), 136-140 (QYPPQ), 146-150 (QYPPQ), 157-161 (QYPPQ), 165-169 (QYPPQ), 176-180 (AYPPQ), 187-191 (AYPPQ), 221-225 (GVPPQ), 238-242 (AYPPQ), 247-251 (AYPPQ), 256-260 (AYPPQ), and 275-279 (AYPPQ). Pro residues-rich tracts occupy residues 75–109 (QYPP…PPQQ) and 118–131 (PQQP…PQQP). A compositionally biased stretch (low complexity) spans 132 to 145 (GAPGQYPPQQGQPG). Composition is skewed to low complexity over residues 153–193 (GQPG…PQQG) and 215–246 (AYPG…GQPG). Positions 253–311 (QPGAYPPQQQQVAYPGQQPPMGAYPPQQGAYPGQQGAYPGQQGAYPGQQGAYPGQPPMG) are enriched in low complexity. EF-hand domains lie at 399–434 (QKMM…LGYY) and 435–467 (FSKG…WSMQ). Ca(2+) contacts are provided by Asp412, Asn414, Ser416, Thr418, and Glu423.

The chain is Calcium-binding protein P (cbpP) from Dictyostelium discoideum (Social amoeba).